The primary structure comprises 434 residues: Homogentisate 1,2-dioxygenase (434 aa).

Histidine 289 serves as the catalytic Proton acceptor. Histidine 332 and glutamate 338 together coordinate Fe cation. The homogentisate site is built by tyrosine 347 and histidine 368. Histidine 368 lines the Fe cation pocket.

Belongs to the homogentisate dioxygenase family. As to quaternary structure, hexamer; dimer of trimers. Fe cation serves as cofactor.

The enzyme catalyses homogentisate + O2 = 4-maleylacetoacetate + H(+). Its pathway is amino-acid degradation; L-phenylalanine degradation; acetoacetate and fumarate from L-phenylalanine: step 4/6. In terms of biological role, involved in the catabolism of homogentisate (2,5-dihydroxyphenylacetate or 2,5-OH-PhAc), a central intermediate in the degradation of phenylalanine and tyrosine. Catalyzes the oxidative ring cleavage of the aromatic ring of homogentisate to yield maleylacetoacetate. This chain is Homogentisate 1,2-dioxygenase, found in Pseudomonas fluorescens (strain ATCC BAA-477 / NRRL B-23932 / Pf-5).